An 88-amino-acid chain; its full sequence is Apolipoprotein C-I (88 aa).

A signal peptide spans 1–26 (MRLFLSLPVLVVVLAMVLEGPAPTQA).

The protein belongs to the apolipoprotein C1 family.

Its subcellular location is the secreted. Functionally, inhibitor of lipoprotein binding to the low density lipoprotein (LDL) receptor, LDL receptor-related protein, and very low density lipoprotein (VLDL) receptor. Associates with high density lipoproteins (HDL) and the triacylglycerol-rich lipoproteins in the plasma and makes up about 10% of the protein of the VLDL and 2% of that of HDL. Appears to interfere directly with fatty acid uptake and is also the major plasma inhibitor of cholesteryl ester transfer protein (CETP). Binds free fatty acids and reduces their intracellular esterification. Modulates the interaction of APOE with beta-migrating VLDL and inhibits binding of beta-VLDL to the LDL receptor-related protein. In Phoca vitulina (Harbor seal), this protein is Apolipoprotein C-I (APOC1).